The sequence spans 471 residues: Adenosylhomocysteinase (471 aa).

Residues Thr-60, Asp-135, and Glu-196 each contribute to the substrate site. 197–199 (TTT) is an NAD(+) binding site. Positions 226 and 230 each coordinate substrate. Residues Asn-231, 260-265 (GYGDVG), Glu-283, Asn-318, 339-341 (IGH), and Asn-387 each bind NAD(+).

The protein belongs to the adenosylhomocysteinase family. The cofactor is NAD(+).

It is found in the cytoplasm. The enzyme catalyses S-adenosyl-L-homocysteine + H2O = L-homocysteine + adenosine. It functions in the pathway amino-acid biosynthesis; L-homocysteine biosynthesis; L-homocysteine from S-adenosyl-L-homocysteine: step 1/1. May play a key role in the regulation of the intracellular concentration of adenosylhomocysteine. This chain is Adenosylhomocysteinase, found in Chlorobaculum parvum (strain DSM 263 / NCIMB 8327) (Chlorobium vibrioforme subsp. thiosulfatophilum).